A 336-amino-acid polypeptide reads, in one-letter code: Fructose-1,6-bisphosphatase class 1 (336 aa).

4 residues coordinate Mg(2+): E90, D112, L114, and D115. Substrate contacts are provided by residues D115–S118, N211, and K277. Mg(2+) is bound at residue E283.

The protein belongs to the FBPase class 1 family. Homotetramer. Requires Mg(2+) as cofactor.

The protein resides in the cytoplasm. It carries out the reaction beta-D-fructose 1,6-bisphosphate + H2O = beta-D-fructose 6-phosphate + phosphate. It functions in the pathway carbohydrate biosynthesis; gluconeogenesis. The chain is Fructose-1,6-bisphosphatase class 1 from Stutzerimonas stutzeri (strain A1501) (Pseudomonas stutzeri).